The following is a 163-amino-acid chain: uncharacterized protein (163 aa).

This is an uncharacterized protein from Dictyostelium discoideum (Social amoeba).